The chain runs to 596 residues: ATP-dependent lipid A-core flippase (596 aa).

Helical transmembrane passes span 34-54, 80-100, 138-158, 164-184, 263-283, and 292-312; these read VWVLVAGVLAMAAVAATEAGI, AAVVGLALARAIAQYASGYLL, AVVFEVNQVLSVLMGVMITLV, VVFLLGYLFYLNWRLTLIVAI, QPLTQFLASIALAVVLTIAVV, and VGGFVAFVTAMLLIISPLKHL. Residues 38–321 enclose the ABC transmembrane type-1 domain; the sequence is VAGVLAMAAV…LMDVNQPLQR (284 aa). The region spanning 353–589 is the ABC transporter domain; the sequence is IEFSHVSFSY…GGLYAHLHRI (237 aa). 389–396 contacts ATP; sequence GPSGSGKT.

Belongs to the ABC transporter superfamily. Lipid exporter (TC 3.A.1.106) family. Homodimer.

Its subcellular location is the cell inner membrane. It catalyses the reaction ATP + H2O + lipid A-core oligosaccharideSide 1 = ADP + phosphate + lipid A-core oligosaccharideSide 2.. Functionally, involved in lipopolysaccharide (LPS) biosynthesis. Translocates lipid A-core from the inner to the outer leaflet of the inner membrane. Transmembrane domains (TMD) form a pore in the inner membrane and the ATP-binding domain (NBD) is responsible for energy generation. This Burkholderia thailandensis (strain ATCC 700388 / DSM 13276 / CCUG 48851 / CIP 106301 / E264) protein is ATP-dependent lipid A-core flippase.